A 353-amino-acid chain; its full sequence is D-alanine--D-alanine ligase (353 aa).

Residues 141–349 (KAAFAAAGLP…LEELVSQLVI (209 aa)) enclose the ATP-grasp domain. Residue 176-231 (EAKLKYPCFVKPANLGSSVGISKAQNRNELLIGLDKAASLDRRIVVEQGVSARELE) participates in ATP binding. Residues aspartate 302, glutamate 316, and asparagine 318 each coordinate Mg(2+).

It belongs to the D-alanine--D-alanine ligase family. The cofactor is Mg(2+). Mn(2+) serves as cofactor.

It is found in the cytoplasm. It carries out the reaction 2 D-alanine + ATP = D-alanyl-D-alanine + ADP + phosphate + H(+). The protein operates within cell wall biogenesis; peptidoglycan biosynthesis. Cell wall formation. This is D-alanine--D-alanine ligase from Prochlorococcus marinus (strain MIT 9303).